We begin with the raw amino-acid sequence, 910 residues long: Eukaryotic translation initiation factor 3 subunit C (910 aa).

Positions 1 to 21 are disordered; sequence MSRFFANGSDSESESSEDEIQ. Positions 11 to 20 are enriched in acidic residues; the sequence is SESESSEDEI. A phosphoserine mark is found at Ser-34, Ser-165, Ser-176, and Ser-185. A disordered region spans residues 157–281; that stretch reads FREAPDQESE…KRAEDDEDGE (125 aa). Residues 162–186 are compositionally biased toward acidic residues; the sequence is DQESEAEDEVVAQESDGGDAGDDSD. Low complexity predominate over residues 193–207; that stretch reads EAAPKAVKSAPAKAA. Residues 209–235 are compositionally biased toward acidic residues; the sequence is ADDDDSDDSIDWDSDSESETESSDDEN. Residues 240-268 show a composition bias toward basic and acidic residues; the sequence is MRERFLKRTTEKEEKDDDKRKDKRKEQKV. A PCI domain is found at 639-815; sequence FHMHINLELL…ETVVMHRSEP (177 aa). Residues 847-910 are disordered; that stretch reads FFQRGNMGNR…QQQVQTIDEE (64 aa). A compositionally biased stretch (low complexity) spans 862–874; the sequence is NRNQNNQGGNWLG. Residues 882 to 891 show a composition bias toward basic residues; the sequence is RNRNQRGHHK. The span at 895–910 shows a compositional bias: low complexity; that stretch reads DRQQQQQQQVQTIDEE.

It belongs to the eIF-3 subunit C family. Component of the eukaryotic translation initiation factor 3 (eIF-3) complex. The eIF-3 complex interacts with pix.

Its subcellular location is the cytoplasm. Functionally, component of the eukaryotic translation initiation factor 3 (eIF-3) complex, which is involved in protein synthesis of a specialized repertoire of mRNAs and, together with other initiation factors, stimulates binding of mRNA and methionyl-tRNAi to the 40S ribosome. The eIF-3 complex specifically targets and initiates translation of a subset of mRNAs involved in cell proliferation. This is Eukaryotic translation initiation factor 3 subunit C from Drosophila yakuba (Fruit fly).